The sequence spans 399 residues: uncharacterized protein (399 aa).

8 WD repeats span residues 59–99 (EHKD…QICQ), 102–141 (GHKD…EFIT), 144–185 (ETVD…QVMY), 187–227 (HTAP…PECR), 241–280 (ETAA…ILAS), 283–322 (AQTE…FRKS), 324–363 (PHEQ…LLGE), and 366–399 (GHQE…DCEH).

It localises to the cytoplasm. The protein resides in the nucleus. This is an uncharacterized protein from Schizosaccharomyces pombe (strain 972 / ATCC 24843) (Fission yeast).